A 107-amino-acid chain; its full sequence is UPF0145 protein YbjQ (107 aa).

The protein belongs to the UPF0145 family.

The protein is UPF0145 protein YbjQ of Escherichia coli (strain SMS-3-5 / SECEC).